The primary structure comprises 549 residues: Chaperonin GroEL (549 aa).

Residues Thr-30–Pro-33, Lys-51, Asp-87–Thr-91, Gly-415, and Asp-495 contribute to the ATP site.

This sequence belongs to the chaperonin (HSP60) family. Forms a cylinder of 14 subunits composed of two heptameric rings stacked back-to-back. Interacts with the co-chaperonin GroES.

The protein localises to the cytoplasm. It carries out the reaction ATP + H2O + a folded polypeptide = ADP + phosphate + an unfolded polypeptide.. In terms of biological role, together with its co-chaperonin GroES, plays an essential role in assisting protein folding. The GroEL-GroES system forms a nano-cage that allows encapsulation of the non-native substrate proteins and provides a physical environment optimized to promote and accelerate protein folding. In Hahella chejuensis (strain KCTC 2396), this protein is Chaperonin GroEL.